Consider the following 143-residue polypeptide: Transcription antitermination protein NusB (143 aa).

Belongs to the NusB family.

Involved in transcription antitermination. Required for transcription of ribosomal RNA (rRNA) genes. Binds specifically to the boxA antiterminator sequence of the ribosomal RNA (rrn) operons. The sequence is that of Transcription antitermination protein NusB from Dehalococcoides mccartyi (strain CBDB1).